The chain runs to 519 residues: Ribonuclease Y (519 aa).

A helical membrane pass occupies residues 3-23 (LMIFAYIAIGAVLGAGTGYLL). One can recognise a KH domain in the interval 209–272 (TVTAVTLPSE…QVAKMALERL (64 aa)). The 94-residue stretch at 335 to 428 (VLQHSLEVSA…VQAADSISGA (94 aa)) folds into the HD domain.

This sequence belongs to the RNase Y family.

It localises to the cell membrane. Endoribonuclease that initiates mRNA decay. This chain is Ribonuclease Y, found in Nitratidesulfovibrio vulgaris (strain ATCC 29579 / DSM 644 / CCUG 34227 / NCIMB 8303 / VKM B-1760 / Hildenborough) (Desulfovibrio vulgaris).